A 1386-amino-acid polypeptide reads, in one-letter code: DNA-directed RNA polymerase subunit beta'' (1386 aa).

Residues Cys224, Cys294, Cys301, and Cys304 each contribute to the Zn(2+) site.

Belongs to the RNA polymerase beta' chain family. RpoC2 subfamily. In terms of assembly, in plastids the minimal PEP RNA polymerase catalytic core is composed of four subunits: alpha, beta, beta', and beta''. When a (nuclear-encoded) sigma factor is associated with the core the holoenzyme is formed, which can initiate transcription. It depends on Zn(2+) as a cofactor.

It localises to the plastid. The protein resides in the chloroplast. The catalysed reaction is RNA(n) + a ribonucleoside 5'-triphosphate = RNA(n+1) + diphosphate. Functionally, DNA-dependent RNA polymerase catalyzes the transcription of DNA into RNA using the four ribonucleoside triphosphates as substrates. The chain is DNA-directed RNA polymerase subunit beta'' from Acorus calamus (Sweet flag).